The primary structure comprises 420 residues: RING finger protein 39 (420 aa).

An RING-type zinc finger spans residues 88–135 (CPLCGGSFEDPVLLACEHSFCRACLARRWGTPPATDTEASPTACPCCG). Disordered regions lie at residues 166 to 186 (PGARAGRRRGGRIPTMGCLDP) and 246 to 265 (DRRSVQLAPPGTPAPPDGPK). A B30.2/SPRY domain is found at 210–420 (DDLPEDYPVV…APLRIVPAES (211 aa)).

The protein resides in the cytoplasm. It carries out the reaction S-ubiquitinyl-[E2 ubiquitin-conjugating enzyme]-L-cysteine + [acceptor protein]-L-lysine = [E2 ubiquitin-conjugating enzyme]-L-cysteine + N(6)-ubiquitinyl-[acceptor protein]-L-lysine.. It functions in the pathway protein modification; protein ubiquitination. In terms of biological role, plays an inhibitory role in anti-RNA viral innate immunity by targeting the adapter DDX3X and promoting its 'Lys-48'-linked polyubiquitination. Alternatively, enhances the cGAS-STING pathway activation by promoting 'Lys-63'-linked ubiquitination of STING1, facilitating the STING1-TBK1 complex formation and STING1 activation. In Macaca mulatta (Rhesus macaque), this protein is RING finger protein 39 (RNF39).